A 153-amino-acid polypeptide reads, in one-letter code: 6,7-dimethyl-8-ribityllumazine synthase (153 aa).

Residues phenylalanine 22, alanine 56 to glutamate 58, and threonine 80 to isoleucine 82 contribute to the 5-amino-6-(D-ribitylamino)uracil site. Serine 85–threonine 86 contacts (2S)-2-hydroxy-3-oxobutyl phosphate. Histidine 88 (proton donor) is an active-site residue. Phenylalanine 113 serves as a coordination point for 5-amino-6-(D-ribitylamino)uracil. Position 127 (arginine 127) interacts with (2S)-2-hydroxy-3-oxobutyl phosphate.

It belongs to the DMRL synthase family. Forms an icosahedral capsid composed of 60 subunits, arranged as a dodecamer of pentamers.

The catalysed reaction is (2S)-2-hydroxy-3-oxobutyl phosphate + 5-amino-6-(D-ribitylamino)uracil = 6,7-dimethyl-8-(1-D-ribityl)lumazine + phosphate + 2 H2O + H(+). It functions in the pathway cofactor biosynthesis; riboflavin biosynthesis; riboflavin from 2-hydroxy-3-oxobutyl phosphate and 5-amino-6-(D-ribitylamino)uracil: step 1/2. Catalyzes the formation of 6,7-dimethyl-8-ribityllumazine by condensation of 5-amino-6-(D-ribitylamino)uracil with 3,4-dihydroxy-2-butanone 4-phosphate. This is the penultimate step in the biosynthesis of riboflavin. This chain is 6,7-dimethyl-8-ribityllumazine synthase, found in Actinobacillus pleuropneumoniae serotype 3 (strain JL03).